We begin with the raw amino-acid sequence, 221 residues long: Protein-L-isoaspartate O-methyltransferase (221 aa).

Residue Ser-68 is part of the active site.

This sequence belongs to the methyltransferase superfamily. L-isoaspartyl/D-aspartyl protein methyltransferase family.

The protein resides in the cytoplasm. The enzyme catalyses [protein]-L-isoaspartate + S-adenosyl-L-methionine = [protein]-L-isoaspartate alpha-methyl ester + S-adenosyl-L-homocysteine. In terms of biological role, catalyzes the methyl esterification of L-isoaspartyl residues in peptides and proteins that result from spontaneous decomposition of normal L-aspartyl and L-asparaginyl residues. It plays a role in the repair and/or degradation of damaged proteins. The protein is Protein-L-isoaspartate O-methyltransferase of Desulfosudis oleivorans (strain DSM 6200 / JCM 39069 / Hxd3) (Desulfococcus oleovorans).